The primary structure comprises 690 residues: Eukaryotic translation initiation factor 3 subunit B (690 aa).

Positions Met-1–Gly-11 are enriched in basic and acidic residues. Residues Met-1 to Asp-33 form a disordered region. A compositionally biased stretch (acidic residues) spans Asn-15–Phe-25. One can recognise an RRM domain in the interval Ser-57 to Asp-141. 5 WD repeats span residues Thr-207–Lys-246, Gly-292–Leu-331, Ile-334–Lys-369, Glu-442–Leu-484, and Pro-530–Thr-575. Residues Glu-613–Ile-646 adopt a coiled-coil conformation.

It belongs to the eIF-3 subunit B family. In terms of assembly, component of the eukaryotic translation initiation factor 3 (eIF-3) complex. The eIF-3 complex interacts with pix. Interacts with mxt.

Its subcellular location is the cytoplasm. RNA-binding component of the eukaryotic translation initiation factor 3 (eIF-3) complex, which is involved in protein synthesis of a specialized repertoire of mRNAs and, together with other initiation factors, stimulates binding of mRNA and methionyl-tRNAi to the 40S ribosome. The eIF-3 complex specifically targets and initiates translation of a subset of mRNAs involved in cell proliferation. The polypeptide is Eukaryotic translation initiation factor 3 subunit B (Drosophila grimshawi (Hawaiian fruit fly)).